We begin with the raw amino-acid sequence, 137 residues long: MIWKRHLTLDELNATSDNTMVAHLGIVYTRLGDDVLEAEMPVDTRTHQPFGLLHGGASAALAETLGSMAGFMMTRDGQCVVGTELNATHHRPVSEGKVRGVCQPLHLGRQNQSWEIVVFDEQGRRCCTCRLGTAVLG.

Residue glutamate 63 is the Nucleophile or proton acceptor of the active site.

The protein belongs to the thioesterase PaaI family. As to quaternary structure, homotetramer. Dimer of dimers. Interacts specifically with the aryl carrier protein (ArCP) domain of EntB.

It is found in the cytoplasm. It functions in the pathway siderophore biosynthesis; enterobactin biosynthesis. Required for optimal enterobactin synthesis. Acts as a proofreading enzyme that prevents EntB misacylation by hydrolyzing the thioester bound existing between EntB and wrongly charged molecules. The chain is Proofreading thioesterase EntH from Escherichia coli O6:H1 (strain CFT073 / ATCC 700928 / UPEC).